The following is a 312-amino-acid chain: Malate dehydrogenase (312 aa).

NAD(+)-binding positions include 7–13 (GAAGGIG) and Asp34. Positions 81 and 87 each coordinate substrate. Residues Asn94 and 117 to 119 (ITN) contribute to the NAD(+) site. Substrate-binding residues include Asn119 and Arg153. His177 serves as the catalytic Proton acceptor. Met227 serves as a coordination point for NAD(+).

This sequence belongs to the LDH/MDH superfamily. MDH type 1 family. As to quaternary structure, homodimer.

It carries out the reaction (S)-malate + NAD(+) = oxaloacetate + NADH + H(+). Functionally, catalyzes the reversible oxidation of malate to oxaloacetate. The chain is Malate dehydrogenase from Citrobacter koseri (strain ATCC BAA-895 / CDC 4225-83 / SGSC4696).